The sequence spans 317 residues: Ribose-phosphate pyrophosphokinase A (317 aa).

Positions 130, 132, and 145 each coordinate Mg(2+). The tract at residues 212–227 (KDKVALIVDDMADTCG) is binding of phosphoribosylpyrophosphate.

The protein belongs to the ribose-phosphate pyrophosphokinase family. Requires Mg(2+) as cofactor.

The catalysed reaction is D-ribose 5-phosphate + ATP = 5-phospho-alpha-D-ribose 1-diphosphate + AMP + H(+). It participates in metabolic intermediate biosynthesis; 5-phospho-alpha-D-ribose 1-diphosphate biosynthesis; 5-phospho-alpha-D-ribose 1-diphosphate from D-ribose 5-phosphate (route I): step 1/1. This is Ribose-phosphate pyrophosphokinase A (prsA) from Dictyostelium discoideum (Social amoeba).